The chain runs to 452 residues: Pup--protein ligase (452 aa).

Glutamate 9 is a Mg(2+) binding site. Arginine 53 is a binding site for ATP. Residue tyrosine 55 participates in Mg(2+) binding. Aspartate 57 serves as the catalytic Proton acceptor. Glutamate 63 is a binding site for Mg(2+). ATP-binding residues include threonine 66 and tryptophan 419.

Belongs to the Pup ligase/Pup deamidase family. Pup-conjugating enzyme subfamily.

It carries out the reaction ATP + [prokaryotic ubiquitin-like protein]-L-glutamate + [protein]-L-lysine = ADP + phosphate + N(6)-([prokaryotic ubiquitin-like protein]-gamma-L-glutamyl)-[protein]-L-lysine.. It participates in protein degradation; proteasomal Pup-dependent pathway. The protein operates within protein modification; protein pupylation. Catalyzes the covalent attachment of the prokaryotic ubiquitin-like protein modifier Pup to the proteasomal substrate proteins, thereby targeting them for proteasomal degradation. This tagging system is termed pupylation. The ligation reaction involves the side-chain carboxylate of the C-terminal glutamate of Pup and the side-chain amino group of a substrate lysine. The polypeptide is Pup--protein ligase (Rhodococcus jostii (strain RHA1)).